The chain runs to 433 residues: Glutamate-1-semialdehyde 2,1-aminomutase (433 aa).

N6-(pyridoxal phosphate)lysine is present on lysine 272.

It belongs to the class-III pyridoxal-phosphate-dependent aminotransferase family. HemL subfamily. As to quaternary structure, homodimer. Pyridoxal 5'-phosphate serves as cofactor.

It is found in the cytoplasm. It carries out the reaction (S)-4-amino-5-oxopentanoate = 5-aminolevulinate. The protein operates within porphyrin-containing compound metabolism; protoporphyrin-IX biosynthesis; 5-aminolevulinate from L-glutamyl-tRNA(Glu): step 2/2. The polypeptide is Glutamate-1-semialdehyde 2,1-aminomutase (Methylacidiphilum infernorum (isolate V4) (Methylokorus infernorum (strain V4))).